The sequence spans 82 residues: RNA-binding protein GK0100 (82 aa).

This sequence belongs to the eukaryotic ribosomal protein eL8 family.

The chain is RNA-binding protein GK0100 from Geobacillus kaustophilus (strain HTA426).